We begin with the raw amino-acid sequence, 739 residues long: Xylosyl- and glucuronyltransferase LARGE2s (739 aa).

Topologically, residues 1-10 (MLCSWRVKLK) are cytoplasmic. A helical; Signal-anchor for type II membrane protein membrane pass occupies residues 11–31 (LLLATITLAVLLSWLYLFVGS). Residues 32 to 739 (LEYGRFLLLP…LKYLTAERNL (708 aa)) lie on the Lumenal side of the membrane. A disordered region spans residues 80–105 (AEGSDGNPQWAASAEDGPPLGGERNN). Asn-105, Asn-131, and Asn-217 each carry an N-linked (GlcNAc...) asparagine glycan. The tract at residues 121–396 (LHVAIVCAGH…FLEYDGNLLR (276 aa)) is xylosyltransferase activity. Asp-225 and Asp-227 together coordinate Mn(2+). An N-linked (GlcNAc...) asparagine glycan is attached at Asn-255. A glucuronyltransferase activity region spans residues 397 to 739 (RELFGCASLP…LKYLTAERNL (343 aa)). Positions 546 and 548 each coordinate Mn(2+).

This sequence in the C-terminal section; belongs to the glycosyltransferase 49 family. In the N-terminal section; belongs to the glycosyltransferase 8 family. Mn(2+) is required as a cofactor.

It is found in the golgi apparatus membrane. The enzyme catalyses 3-O-[beta-D-GlcA-(1-&gt;3)-beta-D-Xyl-(1-&gt;4)-Rib-ol-P-Rib-ol-P-3-beta-D-GalNAc-(1-&gt;3)-beta-D-GlcNAc-(1-&gt;4)-(O-6-P-alpha-D-Man)]-Thr-[protein] + UDP-alpha-D-xylose = 3-O-[alpha-D-Xyl-(1-&gt;3)-beta-D-GlcA-(1-&gt;4)-beta-D-Xyl-(1-&gt;4)-Rib-ol-P-Rib-ol-P-3-beta-D-GalNAc-(1-&gt;3)-beta-D-GlcNAc-(1-&gt;4)-(O-6-P-alpha-D-Man)]-Thr-[protein] + UDP + H(+). It carries out the reaction 3-O-{(1-&gt;[3)-alpha-D-Xyl-(1-&gt;3)-beta-D-GlcA-(1-&gt;](n)-4)-beta-D-Xyl-(1-&gt;4)-Rib-ol-P-Rib-ol-P-3-beta-D-GalNAc-(1-&gt;3)-beta-D-GlcNAc-(1-&gt;4)-O-6-P-alpha-D-Man}-L-Thr-[protein] + UDP-alpha-D-glucuronate = 3-O-{beta-D-GlcA-(1-&gt;[3)-alpha-D-Xyl-(1-&gt;3)-beta-D-GlcA-(1-&gt;](n)-4)-beta-D-Xyl-(1-&gt;4)-Rib-ol-P-Rib-ol-P-3-beta-D-GalNAc-(1-&gt;3)-beta-D-GlcNAc-(1-&gt;4)-O-6-P-alpha-D-Man}-L-Thr-[protein] + UDP + H(+). It catalyses the reaction 3-O-{beta-D-GlcA-(1-&gt;[3)-alpha-D-Xyl-(1-&gt;3)-beta-D-GlcA-(1-&gt;](n)-4)-beta-D-Xyl-(1-&gt;4)-Rib-ol-P-Rib-ol-P-3-beta-D-GalNAc-(1-&gt;3)-beta-D-GlcNAc-(1-&gt;4)-O-6-P-alpha-D-Man}-L-Thr-[protein] + UDP-alpha-D-xylose = 3-O-{(1-&gt;[3)-alpha-D-Xyl-(1-&gt;3)-beta-D-GlcA-(1-&gt;](n+1)-4)-beta-D-Xyl-(1-&gt;4)-Rib-ol-P-Rib-ol-P-3-beta-D-GalNAc-(1-&gt;3)-beta-D-GlcNAc-(1-&gt;4)-O-6-P-alpha-D-Man}-L-Thr-[protein] + UDP + H(+). It functions in the pathway protein modification; protein glycosylation. In terms of biological role, bifunctional glycosyltransferase with both alpha-1,3-xylosyltransferase and beta-1,3-glucuronyltransferase activities involved in the maturation of alpha-dystroglycan (DAG1) by glycosylation leading to DAG1 binding to laminin G-like domain-containing extracellular proteins with high affinity and in a phosphorylated-O-mannosyl trisaccharide dependent manner. Elongates the glucuronyl-beta-1,4-xylose-beta disaccharide primer structure by adding repeating units [-3-Xylose-alpha-1,3-GlcA-beta-1-] to produce a heteropolysaccharide. Supports the maturation of DAG1 more effectively than LARGE1. In addition, can modify both heparan sulfate (HS)- and chondroitin/dermatan sulfate (CS/DS)-proteoglycans (PGs), namely GPC4, with a glycosaminoglycan (GAG)-like polysaccharide composed of xylose and glucuronic acid to confer laminin binding. The sequence is that of Xylosyl- and glucuronyltransferase LARGE2s from Gallus gallus (Chicken).